The sequence spans 505 residues: Tyrosine-protein kinase Blk (505 aa).

A disordered region spans residues 1-37 (MGLVSSKKPDKEKPIKEKDKGQWSPLKVSAQDKDAPP). Gly-2 carries the N-myristoyl glycine lipid modification. Residues 7-21 (KKPDKEKPIKEKDKG) show a composition bias toward basic and acidic residues. Positions 58-118 (EDKHFVVALY…PSNFVARVES (61 aa)) constitute an SH3 domain. The SH2 domain maps to 124-220 (WFFRSQGRKE…GLCQRLTLPC (97 aa)). Residues 241–494 (LRLVRKLGSG…FLQSVLEDFY (254 aa)) enclose the Protein kinase domain. ATP-binding positions include 247–255 (LGSGQFGEV) and Lys-269. The active-site Proton acceptor is the Asp-360. Tyr-389 is modified (phosphotyrosine; by autocatalysis).

It belongs to the protein kinase superfamily. Tyr protein kinase family. SRC subfamily. Interacts with CBL (via SH2 domain). Interacts with CD79A and CD79B (via SH2 domain). In terms of processing, phosphorylated on tyrosine residues after antibody-mediated surface engagement of the B-cell antigen receptor (BCR). Ubiquitination of activated BLK by the UBE3A ubiquitin protein ligase leads to its degradation by the ubiquitin-proteasome pathway. Expressed in lymphatic organs, pancreatic islets, Leydig cells, striate ducts of salivary glands and hair follicles.

It is found in the cell membrane. The enzyme catalyses L-tyrosyl-[protein] + ATP = O-phospho-L-tyrosyl-[protein] + ADP + H(+). With respect to regulation, antibody-mediated surface engagement of the B-cell antigen receptor (BCR) which results in the phosphorylation of BLK on tyrosine residues, stimulates the enzymatic activity. Its function is as follows. Non-receptor tyrosine kinase involved in B-lymphocyte development, differentiation and signaling. B-cell receptor (BCR) signaling requires a tight regulation of several protein tyrosine kinases and phosphatases, and associated coreceptors. Binding of antigen to the B-cell antigen receptor (BCR) triggers signaling that ultimately leads to B-cell activation. Signaling through BLK plays an important role in transmitting signals through surface immunoglobulins and supports the pro-B to pre-B transition, as well as the signaling for growth arrest and apoptosis downstream of B-cell receptor. Specifically binds and phosphorylates CD79A at 'Tyr-188'and 'Tyr-199', as well as CD79B at 'Tyr-196' and 'Tyr-207'. Also phosphorylates the immunoglobulin G receptors FCGR2A, FCGR2B and FCGR2C. With FYN and LYN, plays an essential role in pre-B-cell receptor (pre-BCR)-mediated NF-kappa-B activation. Also contributes to BTK activation by indirectly stimulating BTK intramolecular autophosphorylation. In pancreatic islets, acts as a modulator of beta-cells function through the up-regulation of PDX1 and NKX6-1 and consequent stimulation of insulin secretion in response to glucose. Phosphorylates CGAS, promoting retention of CGAS in the cytosol. This is Tyrosine-protein kinase Blk (BLK) from Homo sapiens (Human).